The chain runs to 351 residues: UPF0764 protein C16orf89 homolog (351 aa).

A signal peptide spans 1–25 (MKSLKMLYPLFMLLVLSSKIDLSNQ).

The protein belongs to the UPF0764 family. In terms of assembly, homodimer.

It is found in the secreted. This chain is UPF0764 protein C16orf89 homolog, found in Danio rerio (Zebrafish).